Consider the following 164-residue polypeptide: Phosphopantetheine adenylyltransferase (164 aa).

Substrate is bound at residue threonine 9. ATP is bound by residues 9–10 and histidine 17; that span reads TF. Substrate-binding residues include lysine 41, leucine 78, and arginine 92. ATP is bound by residues 93–95, glutamate 103, and 128–134; these read GLR and RQAIASK.

Belongs to the bacterial CoaD family. As to quaternary structure, homohexamer. The cofactor is Mg(2+).

It is found in the cytoplasm. It catalyses the reaction (R)-4'-phosphopantetheine + ATP + H(+) = 3'-dephospho-CoA + diphosphate. The protein operates within cofactor biosynthesis; coenzyme A biosynthesis; CoA from (R)-pantothenate: step 4/5. Functionally, reversibly transfers an adenylyl group from ATP to 4'-phosphopantetheine, yielding dephospho-CoA (dPCoA) and pyrophosphate. In Paracoccus denitrificans (strain Pd 1222), this protein is Phosphopantetheine adenylyltransferase.